The sequence spans 456 residues: Septin-10 (456 aa).

In terms of domain architecture, Septin-type G spans 40-306; sequence QGFCFNILCV…ELYRRCKLQE (267 aa). Positions 50–57 are G1 motif; sequence GETGIGKS. Residues 50 to 57, G105, 186 to 194, G240, and R255 each bind GTP; these read GETGIGKS and KADTISKSE. The G3 motif stretch occupies residues 102–105; it reads NTVG. Residues 185–188 form a G4 motif region; it reads AKAD. Residue S418 is modified to Phosphoserine.

This sequence belongs to the TRAFAC class TrmE-Era-EngA-EngB-Septin-like GTPase superfamily. Septin GTPase family. In terms of assembly, septins polymerize into heterooligomeric protein complexes that form filaments, and can associate with cellular membranes, actin filaments and microtubules. GTPase activity is required for filament formation. Interacts with ADGB. Post-translationally, proteolytically cleaved in vitro in a calmodulin-dependent manner.

The protein localises to the cytoplasm. It localises to the cytoskeleton. It is found in the cell projection. The protein resides in the cilium. Its subcellular location is the flagellum. In terms of biological role, filament-forming cytoskeletal GTPase. May play a role in cytokinesis (Potential). This chain is Septin-10, found in Rattus norvegicus (Rat).